Consider the following 275-residue polypeptide: 5'-nucleotidase SurE (275 aa).

Residues Asp-12, Asp-13, Ser-44, and Asn-102 each contribute to the a divalent metal cation site.

Belongs to the SurE nucleotidase family. The cofactor is a divalent metal cation.

The protein localises to the cytoplasm. The enzyme catalyses a ribonucleoside 5'-phosphate + H2O = a ribonucleoside + phosphate. In terms of biological role, nucleotidase that shows phosphatase activity on nucleoside 5'-monophosphates. This chain is 5'-nucleotidase SurE, found in Synechococcus sp. (strain RCC307).